A 138-amino-acid polypeptide reads, in one-letter code: ATP synthase epsilon chain (138 aa).

The protein belongs to the ATPase epsilon chain family. In terms of assembly, F-type ATPases have 2 components, CF(1) - the catalytic core - and CF(0) - the membrane proton channel. CF(1) has five subunits: alpha(3), beta(3), gamma(1), delta(1), epsilon(1). CF(0) has three main subunits: a, b and c.

It is found in the cell inner membrane. In terms of biological role, produces ATP from ADP in the presence of a proton gradient across the membrane. This Verminephrobacter eiseniae (strain EF01-2) protein is ATP synthase epsilon chain.